A 292-amino-acid chain; its full sequence is Protein LicB (292 aa).

EamA domains are found at residues 70–139 (ALSG…LLAI) and 160–286 (LGWS…VTLY).

The polypeptide is Protein LicB (licB) (Haemophilus influenzae (strain ATCC 51907 / DSM 11121 / KW20 / Rd)).